The sequence spans 638 residues: Probable potassium transport system protein Kup (638 aa).

The tract at residues 1–20 (MQVEHEVATEGGQAPASSGH) is disordered. 12 helical membrane passes run 24 to 44 (IAGL…TSPL), 67 to 87 (ILSL…VVFI), 115 to 135 (AWWL…DGMI), 153 to 173 (PAFK…LFVM), 181 to 201 (VGAI…VLGI), 228 to 248 (LIGW…EALY), 263 to 283 (WFSL…ALIL), 301 to 321 (LVYP…QAVI), 353 to 373 (IYVP…VVGF), 382 to 402 (AYGI…FVVV), 413 to 433 (AVLF…ATTV), and 435 to 455 (IFAG…LLRT).

The protein belongs to the HAK/KUP transporter (TC 2.A.72) family.

The protein localises to the cell inner membrane. It catalyses the reaction K(+)(in) + H(+)(in) = K(+)(out) + H(+)(out). Transport of potassium into the cell. Likely operates as a K(+):H(+) symporter. This is Probable potassium transport system protein Kup from Azoarcus sp. (strain BH72).